A 428-amino-acid polypeptide reads, in one-letter code: MLRFAPSPTGDMRTEQLRIAIFNYIVAKQKEVNFIVRIEDTDKERNITGKDTEILQILEKFAITHDSVFHQSEHLNIHQTLAIRLLEEGKAFVCTCTPEAPESDKTPSRYNGKCFNVDKEELKRLKEEKIPFVIRLKKPEHDMIIHDLYKGETVTSADEVDSFVILRADATPTENFASACDDMLSGIDFIIRSEEHLDETAKQEYVKKQLGYEEETTYAHLPVILNEEGQKMDEKDDAFTVKWLFEEGYIPDAIANYLISLGNTTPTDIFTLPEAIEWFNITKLSGSPVKFNIEELRLLNRKHLEKMDDKRLSSLFGFADADIGKLAKLYINEAATINELDARIKAIFSPKDFDGKWGEQMRMLEKIIAEAPMFATFEAFESHLMKESGLSGEYFSKPLRVLLTGAEQGPELSDIYPYIKSYLLEVAS.

The short motif at Pro6 to Gln16 is the 'HIGH' region element.

This sequence belongs to the class-I aminoacyl-tRNA synthetase family. Glutamate--tRNA ligase type 1 subfamily. As to quaternary structure, monomer.

It localises to the cytoplasm. It carries out the reaction tRNA(Glu) + L-glutamate + ATP = L-glutamyl-tRNA(Glu) + AMP + diphosphate. Catalyzes the attachment of glutamate to tRNA(Glu) in a two-step reaction: glutamate is first activated by ATP to form Glu-AMP and then transferred to the acceptor end of tRNA(Glu). The sequence is that of Glutamate--tRNA ligase 2 from Sulfurovum sp. (strain NBC37-1).